The chain runs to 311 residues: Mitochondrial FAD carrier protein FLX1 (311 aa).

Solcar repeat units follow at residues 7–101 (TPLQ…TKEL), 123–210 (MNSL…LKQR), and 224–310 (LTNL…LKHR). The next 6 membrane-spanning stretches (helical) occupy residues 13–33 (VISGLSAGSVTTLVVHPLDLL), 77–97 (LSINLFGNAIAWGVYFGLYGV), 129–149 (LSAGASSGLMTAILTNPIWVI), 183–203 (LWKGLVPALFGVSQGALYFAV), 230–250 (IEITSLGKMVSVTLVYPFQLL), and 266–286 (LFPLIKLIIANDGFVGLYKGL).

It belongs to the mitochondrial carrier (TC 2.A.29) family.

It is found in the mitochondrion inner membrane. Transport of FAD from the cytosol to the mitochondrial matrix. This Saccharomyces cerevisiae (strain ATCC 204508 / S288c) (Baker's yeast) protein is Mitochondrial FAD carrier protein FLX1 (FLX1).